The chain runs to 264 residues: Expansin-B3 (264 aa).

Positions 1–25 (MQLFPVMLATLCIVLQLLIGSSALA) are cleaved as a signal peptide. One can recognise an Expansin-like EG45 domain in the interval 54 to 162 (GGACGYGTLV…RRTACKYRGK (109 aa)). 3 cysteine pairs are disulfide-bonded: Cys-57–Cys-86, Cys-89–Cys-157, and Cys-94–Cys-100. In terms of domain architecture, Expansin-like CBD spans 175–256 (FWLSLLVEFE…NWAPKATYSS (82 aa)).

Belongs to the expansin family. Expansin B subfamily.

It localises to the secreted. It is found in the cell wall. Its subcellular location is the membrane. May cause loosening and extension of plant cell walls by disrupting non-covalent bonding between cellulose microfibrils and matrix glucans. No enzymatic activity has been found. This is Expansin-B3 (EXPB3) from Arabidopsis thaliana (Mouse-ear cress).